The sequence spans 741 residues: Chromosome transmission fidelity protein 18 (741 aa).

Residue Gly183–Thr190 coordinates ATP.

This sequence belongs to the activator 1 small subunits family. CTF18 subfamily. In terms of assembly, component of the CTF18-RFC complex, which consists of CTF18, CTF8, DCC1, RFC2, RFC3, RFC4 and RFC5. CTF18 interacts with ECO1.

It is found in the nucleus. Essential for the fidelity of chromosome transmission. Required for the DNA replication block checkpoint. Component of the RFC-like complex CTF18-RFC which is required for efficient establishment of chromosome cohesion during S-phase and may load or unload POL30/PCNA. During a clamp loading circle, the RFC:clamp complex binds to DNA and the recognition of the double-stranded/single-stranded junction stimulates ATP hydrolysis by RFC. The complex presumably provides bipartite ATP sites in which one subunit supplies a catalytic site for hydrolysis of ATP bound to the neighboring subunit. Dissociation of RFC from the clamp leaves the clamp encircling DNA. This is Chromosome transmission fidelity protein 18 (CTF18) from Saccharomyces cerevisiae (strain ATCC 204508 / S288c) (Baker's yeast).